We begin with the raw amino-acid sequence, 359 residues long: Phosphoserine aminotransferase (359 aa).

L-glutamate is bound at residue R42. Residues 76 to 77, W102, T152, D171, and Q194 contribute to the pyridoxal 5'-phosphate site; that span reads AS. K195 is subject to N6-(pyridoxal phosphate)lysine. 236 to 237 provides a ligand contact to pyridoxal 5'-phosphate; that stretch reads NT.

Belongs to the class-V pyridoxal-phosphate-dependent aminotransferase family. SerC subfamily. Homodimer. Requires pyridoxal 5'-phosphate as cofactor.

It localises to the cytoplasm. It carries out the reaction O-phospho-L-serine + 2-oxoglutarate = 3-phosphooxypyruvate + L-glutamate. The catalysed reaction is 4-(phosphooxy)-L-threonine + 2-oxoglutarate = (R)-3-hydroxy-2-oxo-4-phosphooxybutanoate + L-glutamate. It participates in amino-acid biosynthesis; L-serine biosynthesis; L-serine from 3-phospho-D-glycerate: step 2/3. It functions in the pathway cofactor biosynthesis; pyridoxine 5'-phosphate biosynthesis; pyridoxine 5'-phosphate from D-erythrose 4-phosphate: step 3/5. Catalyzes the reversible conversion of 3-phosphohydroxypyruvate to phosphoserine and of 3-hydroxy-2-oxo-4-phosphonooxybutanoate to phosphohydroxythreonine. The protein is Phosphoserine aminotransferase of Vesicomyosocius okutanii subsp. Calyptogena okutanii (strain HA).